A 501-amino-acid chain; its full sequence is Lysine--tRNA ligase (501 aa).

Residues Glu-411 and Glu-418 each coordinate Mg(2+).

Belongs to the class-II aminoacyl-tRNA synthetase family. As to quaternary structure, homodimer. Mg(2+) serves as cofactor.

It is found in the cytoplasm. The enzyme catalyses tRNA(Lys) + L-lysine + ATP = L-lysyl-tRNA(Lys) + AMP + diphosphate. The polypeptide is Lysine--tRNA ligase (Aliivibrio fischeri (strain ATCC 700601 / ES114) (Vibrio fischeri)).